Consider the following 488-residue polypeptide: Protein nucleotidyltransferase YdiU (488 aa).

Positions 91, 93, 94, 114, 126, 127, 177, and 184 each coordinate ATP. The active-site Proton acceptor is the Asp-253. Positions 254 and 263 each coordinate Mg(2+). Asp-263 is an ATP binding site.

The protein belongs to the SELO family. Mg(2+) is required as a cofactor. Mn(2+) serves as cofactor.

It carries out the reaction L-seryl-[protein] + ATP = 3-O-(5'-adenylyl)-L-seryl-[protein] + diphosphate. The enzyme catalyses L-threonyl-[protein] + ATP = 3-O-(5'-adenylyl)-L-threonyl-[protein] + diphosphate. It catalyses the reaction L-tyrosyl-[protein] + ATP = O-(5'-adenylyl)-L-tyrosyl-[protein] + diphosphate. The catalysed reaction is L-histidyl-[protein] + UTP = N(tele)-(5'-uridylyl)-L-histidyl-[protein] + diphosphate. It carries out the reaction L-seryl-[protein] + UTP = O-(5'-uridylyl)-L-seryl-[protein] + diphosphate. The enzyme catalyses L-tyrosyl-[protein] + UTP = O-(5'-uridylyl)-L-tyrosyl-[protein] + diphosphate. Functionally, nucleotidyltransferase involved in the post-translational modification of proteins. It can catalyze the addition of adenosine monophosphate (AMP) or uridine monophosphate (UMP) to a protein, resulting in modifications known as AMPylation and UMPylation. This Bacillus thuringiensis (strain Al Hakam) protein is Protein nucleotidyltransferase YdiU.